The primary structure comprises 451 residues: MGRERVTVVGGGLAGSEAAWRLAQGGVEVELVEMKPGRRSPAHVLDGLAELVCSNSLRSDNPHNAVGLLHEELRRLGSLVLSAADATRVPAGDALAVDRERFSALVTGRLRGHPLVRVRQEELLRLPEGPGLTLVATGPLTGDALAADVAALAGGRLHFYDAIAPIVAADSIDMSIAYARSRYGKGSGDDYLNLPFDEGQYRAFVGALLAGEKVAAHDFEEPRYFEGCLPIEVMAERGADVLAYGPMKPVGLEDPRTGRRPFAVVQLRREDVAGTAYNLVGFQTRLTWTEQRRILREYVPGLAGAEFVRLGQIHRNTFLEAPRVLAPDLSARERPHLFFAGQITGVEGYVESAACGHLAARAMLDRLAGRPFLPPPAATALGALHRHLTGEAHPPGYDYQPTNVVFALFPPLTGRHRGKAARKDAHAERARKEIAPWIDPWTHTARGAAAP.

Residue 10 to 15 participates in FAD binding; sequence GGGLAG.

Belongs to the MnmG family. TrmFO subfamily. Requires FAD as cofactor.

It is found in the cytoplasm. It catalyses the reaction uridine(54) in tRNA + (6R)-5,10-methylene-5,6,7,8-tetrahydrofolate + NADH + H(+) = 5-methyluridine(54) in tRNA + (6S)-5,6,7,8-tetrahydrofolate + NAD(+). It carries out the reaction uridine(54) in tRNA + (6R)-5,10-methylene-5,6,7,8-tetrahydrofolate + NADPH + H(+) = 5-methyluridine(54) in tRNA + (6S)-5,6,7,8-tetrahydrofolate + NADP(+). In terms of biological role, catalyzes the folate-dependent formation of 5-methyl-uridine at position 54 (M-5-U54) in all tRNAs. In Anaeromyxobacter sp. (strain Fw109-5), this protein is Methylenetetrahydrofolate--tRNA-(uracil-5-)-methyltransferase TrmFO.